A 206-amino-acid polypeptide reads, in one-letter code: Small ribosomal subunit protein uS4 (206 aa).

The S4 RNA-binding domain occupies 96–156 (RRLDNVVYRM…DKSKNQSRIK (61 aa)).

It belongs to the universal ribosomal protein uS4 family. In terms of assembly, part of the 30S ribosomal subunit. Contacts protein S5. The interaction surface between S4 and S5 is involved in control of translational fidelity.

One of the primary rRNA binding proteins, it binds directly to 16S rRNA where it nucleates assembly of the body of the 30S subunit. Functionally, with S5 and S12 plays an important role in translational accuracy. In Buchnera aphidicola subsp. Schizaphis graminum (strain Sg), this protein is Small ribosomal subunit protein uS4.